The sequence spans 855 residues: Cytosolic phospholipase A2 zeta (855 aa).

In terms of domain architecture, C2 spans 27–145 (EKSEPQWKHR…QLGQPCTKNF (119 aa)). Positions 60, 66, 116, 118, and 123 each coordinate Ca(2+). The PLA2c domain maps to 304 to 855 (MSSSGDLDLR…RRQAGGRVGG (552 aa)). S393 serves as the catalytic Nucleophile. Catalysis depends on D685, which acts as the Proton acceptor.

The cofactor is Ca(2+). In terms of tissue distribution, strongly expressed in thyroid, expressed at intermediate level in stomach and at very low level in large intestine and prostate.

The protein resides in the cytoplasm. It localises to the cytosol. It is found in the cell membrane. Its subcellular location is the mitochondrion. It carries out the reaction a 1,2-diacyl-sn-glycero-3-phosphocholine + H2O = a 1-acyl-sn-glycero-3-phosphocholine + a fatty acid + H(+). It catalyses the reaction a 1-O-alkyl-2-acyl-sn-glycero-3-phosphocholine + H2O = a 1-O-alkyl-sn-glycero-3-phosphocholine + a fatty acid + H(+). The enzyme catalyses 1-hexadecanoyl-2-(9Z-octadecenoyl)-sn-glycero-3-phosphocholine + H2O = 2-(9Z-octadecenoyl)-sn-glycero-3-phosphocholine + hexadecanoate + H(+). The catalysed reaction is 1-hexadecanoyl-2-(9Z,12Z-octadecadienoyl)-sn-glycero-3-phosphocholine + H2O = (9Z,12Z)-octadecadienoate + 1-hexadecanoyl-sn-glycero-3-phosphocholine + H(+). It carries out the reaction 1-hexadecanoyl-2-(5Z,8Z,11Z,14Z-eicosatetraenoyl)-sn-glycero-3-phosphocholine + H2O = 1-hexadecanoyl-sn-glycero-3-phosphocholine + (5Z,8Z,11Z,14Z)-eicosatetraenoate + H(+). It catalyses the reaction 1-hexadecanoyl-2-(9Z,12Z-octadecadienoyl)-sn-glycero-3-phosphoethanolamine + H2O = 1-hexadecanoyl-sn-glycero-3-phosphoethanolamine + (9Z,12Z)-octadecadienoate + H(+). The enzyme catalyses 1-hexadecanoyl-2-(5Z,8Z,11Z,14Z-eicosatetraenoyl)-sn-glycero-3-phosphoethanolamine + H2O = 1-hexadecanoyl-sn-glycero-3-phosphoethanolamine + (5Z,8Z,11Z,14Z)-eicosatetraenoate + H(+). The catalysed reaction is 1-(5Z,8Z,11Z,14Z-eicosatetraenoyl)-2-O-hexadecyl-sn-glycero-3-phosphocholine + H2O = 2-O-hexadecyl-sn-glycero-3-phosphocholine + (5Z,8Z,11Z,14Z)-eicosatetraenoate + H(+). It carries out the reaction 1-O-hexadecyl-2-(5Z,8Z,11Z,14Z)-eicosatetraenoyl-sn-glycero-3-phosphocholine + H2O = 1-O-hexadecyl-sn-glycero-3-phosphocholine + (5Z,8Z,11Z,14Z)-eicosatetraenoate + H(+). It catalyses the reaction 1-hexadecanoyl-sn-glycero-3-phosphocholine + H2O = sn-glycerol 3-phosphocholine + hexadecanoate + H(+). Stimulated by cytosolic Ca(2+). Its function is as follows. Has calcium-dependent phospholipase and lysophospholipase activities with a potential role in membrane lipid remodeling and biosynthesis of lipid mediators. Preferentially hydrolyzes the ester bond of the fatty acyl group attached at sn-2 position of phospholipids (phospholipase A2 activity). Selectively hydrolyzes sn-2 arachidonoyl group from membrane phospholipids, providing the precursor for eicosanoid biosynthesis. In myocardial mitochondria, plays a major role in arachidonate release that is metabolically channeled to the formation of cardioprotective eicosanoids, epoxyeicosatrienoates (EETs). The sequence is that of Cytosolic phospholipase A2 zeta (Pla2g4f) from Mus musculus (Mouse).